The sequence spans 284 residues: MEMO1 family protein YG5714_2180 (284 aa).

Belongs to the MEMO1 family.

In Saccharolobus islandicus (strain Y.G.57.14 / Yellowstone #1) (Sulfolobus islandicus), this protein is MEMO1 family protein YG5714_2180.